The following is a 258-amino-acid chain: Snake venom serine protease 5 (258 aa).

The signal sequence occupies residues 1-18; the sequence is MVLIRVLANLLILQLSYA. The propeptide occupies 19 to 24; the sequence is QKSSEL. Residues 25–249 enclose the Peptidase S1 domain; sequence VVGGRPCNIN…HLDWIQNIIA (225 aa). 6 disulfide bridges follow: C31-C163, C50-C66, C98-C256, C142-C210, C174-C189, and C200-C225. N44 carries an N-linked (GlcNAc...) asparagine glycan. H65 serves as the catalytic Charge relay system. N103 carries N-linked (GlcNAc...) asparagine glycosylation. Catalysis depends on D110, which acts as the Charge relay system. N-linked (GlcNAc...) asparagine glycosylation is found at N121, N122, N154, and N170. Catalysis depends on S204, which acts as the Charge relay system. N251 carries an N-linked (GlcNAc...) asparagine glycan.

This sequence belongs to the peptidase S1 family. Snake venom subfamily. Monomer. As to expression, expressed by the venom gland.

The protein localises to the secreted. In terms of biological role, snake venom serine protease that may act in the hemostasis system of the prey. This chain is Snake venom serine protease 5, found in Trimeresurus stejnegeri (Chinese green tree viper).